Consider the following 159-residue polypeptide: Phosphopantetheine adenylyltransferase (159 aa).

Residue Ser8 participates in substrate binding. ATP is bound by residues 8-9 (SF) and His16. Substrate-binding residues include Lys40, Thr72, and Arg86. ATP contacts are provided by residues 87 to 89 (GLR), Glu97, and 122 to 128 (YSFLSSS).

Belongs to the bacterial CoaD family. Homohexamer. It depends on Mg(2+) as a cofactor.

It localises to the cytoplasm. It catalyses the reaction (R)-4'-phosphopantetheine + ATP + H(+) = 3'-dephospho-CoA + diphosphate. It functions in the pathway cofactor biosynthesis; coenzyme A biosynthesis; CoA from (R)-pantothenate: step 4/5. Reversibly transfers an adenylyl group from ATP to 4'-phosphopantetheine, yielding dephospho-CoA (dPCoA) and pyrophosphate. This is Phosphopantetheine adenylyltransferase from Synechocystis sp. (strain ATCC 27184 / PCC 6803 / Kazusa).